We begin with the raw amino-acid sequence, 1296 residues long: Phosphoribosylformylglycinamidine synthase (1296 aa).

A disordered region spans residues 304–323; it reads WPGAATGSGGEIRDEGATGR. ATP contacts are provided by residues 306 to 317 and Ala-677; that span reads GAATGSGGEIRD. Mg(2+) contacts are provided by Asp-678, Glu-717, Asn-721, and Asp-885. Ser-887 provides a ligand contact to ATP. Residues 1000–1013 show a composition bias toward basic and acidic residues; it reads PDCADQEHQAKQDE. Positions 1000–1019 are disordered; it reads PDCADQEHQAKQDESDPGLN. The region spanning 1043 to 1296 is the Glutamine amidotransferase type-1 domain; the sequence is VAVLREQGVN…MFRNARKQLG (254 aa). Cys-1136 functions as the Nucleophile in the catalytic mechanism. Active-site residues include His-1261 and Glu-1263.

It in the N-terminal section; belongs to the FGAMS family. As to quaternary structure, monomer.

The protein resides in the cytoplasm. It catalyses the reaction N(2)-formyl-N(1)-(5-phospho-beta-D-ribosyl)glycinamide + L-glutamine + ATP + H2O = 2-formamido-N(1)-(5-O-phospho-beta-D-ribosyl)acetamidine + L-glutamate + ADP + phosphate + H(+). The protein operates within purine metabolism; IMP biosynthesis via de novo pathway; 5-amino-1-(5-phospho-D-ribosyl)imidazole from N(2)-formyl-N(1)-(5-phospho-D-ribosyl)glycinamide: step 1/2. In terms of biological role, phosphoribosylformylglycinamidine synthase involved in the purines biosynthetic pathway. Catalyzes the ATP-dependent conversion of formylglycinamide ribonucleotide (FGAR) and glutamine to yield formylglycinamidine ribonucleotide (FGAM) and glutamate. This chain is Phosphoribosylformylglycinamidine synthase, found in Yersinia pestis bv. Antiqua (strain Nepal516).